The following is a 598-amino-acid chain: UvrABC system protein C (598 aa).

Positions 11–91 (QKPGVYIMHN…IKKYRPHYNI (81 aa)) constitute a GIY-YIG domain. The 36-residue stretch at 195–230 (KTTIKKLKKDMNRYAKNMEFEKAAMLRDQIDTIKIT) folds into the UVR domain.

It belongs to the UvrC family. In terms of assembly, interacts with UvrB in an incision complex.

Its subcellular location is the cytoplasm. Functionally, the UvrABC repair system catalyzes the recognition and processing of DNA lesions. UvrC both incises the 5' and 3' sides of the lesion. The N-terminal half is responsible for the 3' incision and the C-terminal half is responsible for the 5' incision. This Methanosphaera stadtmanae (strain ATCC 43021 / DSM 3091 / JCM 11832 / MCB-3) protein is UvrABC system protein C.